A 454-amino-acid polypeptide reads, in one-letter code: Probable ECA polymerase (454 aa).

The next 11 membrane-spanning stretches (helical) occupy residues Phe-6–Phe-26, Val-37–Leu-57, Val-63–Ala-83, Met-122–Phe-142, Gly-157–Leu-177, Ala-183–Gly-203, Ile-209–Gly-229, Met-230–Tyr-250, Leu-343–Ile-363, Tyr-380–Ala-400, and Val-411–Leu-431.

The protein belongs to the WzyE family. As to quaternary structure, probably part of a complex composed of WzxE, WzyE and WzzE.

Its subcellular location is the cell inner membrane. It functions in the pathway bacterial outer membrane biogenesis; enterobacterial common antigen biosynthesis. Its function is as follows. Probably involved in the polymerization of enterobacterial common antigen (ECA) trisaccharide repeat units. The polypeptide is Probable ECA polymerase (Cronobacter sakazakii (strain ATCC BAA-894) (Enterobacter sakazakii)).